We begin with the raw amino-acid sequence, 432 residues long: MQVSVETTQGLGRRVTITIAADSIETAVKSELVNVAKKVRIDGFRKGKVPMNVVAQRYGASVRQDVLGELMSRNFIDAIIKEKINPAGAPNYVPGEYKQGEDFTYSVEFEVYPEVELKGLETIEVEKPVVEVTDADVDGMLDTLRKQQANWKDKDGAVDAEDRVTIDFSGSVDGEEFEGGKASDFVLAMGQGRMIPGFEEGIKGHKAGEEFTIDVTFPEEYHAENLKGKAAKFVINLKKVEERELPELTEEFIKRFGVEDGSVAGLRAEVRKNMERELNGAVRNRVKSQAIDGLVKANEIDVPAALIDSEIDVLRRQAAQRFGGNQQQALELPRELFEEQAKRRVVVGLLLGEVIRTHELKADDERVKGLIEEMASAYEDPSEVVQFYGSNKELMDNMRNVALEEQAVEAVLAKAKVSEKATSFNELMNQQA.

Positions 161–246 (EDRVTIDFSG…LKKVEERELP (86 aa)) constitute a PPIase FKBP-type domain.

The protein belongs to the FKBP-type PPIase family. Tig subfamily.

Its subcellular location is the cytoplasm. It catalyses the reaction [protein]-peptidylproline (omega=180) = [protein]-peptidylproline (omega=0). Its function is as follows. Involved in protein export. Acts as a chaperone by maintaining the newly synthesized protein in an open conformation. Functions as a peptidyl-prolyl cis-trans isomerase. The chain is Trigger factor from Enterobacter sp. (strain 638).